The following is a 359-amino-acid chain: MADQDPAGISPLQQMVASGTGAVVTSLFMTPLDVVKVRLQSQRPSMASELMPSSRLWSLSYTKLPSSLQSTGKCLLYCNGVLEPLYLCPNGARCATWFQDPTRFTGTMDAFVKIVRHEGTRTLWSGLPATLVMTVPATAIYFTAYDQLKAFLCGRALTSDLYAPMVAGALARLGTVTVISPLELMRTKLQAQHVSYRELGACVRTAVAQGGWRSLWLGWGPTALRDVPFSALYWFNYELVKSWLNGFRPKDQTSVGMSFVAGGISGTVAAVLTLPFDVVKTQRQVALGAMEAVRVNPLHVDSTWLLLRRIRAESGTKGLFAGFLPRIIKAAPSCAIMISTYEFGKSFFQRLNQDRLLGG.

The Mitochondrial intermembrane segment spans residues 1–14; sequence MADQDPAGISPLQQ. 3 Solcar repeats span residues 9–151, 159–243, and 253–347; these read ISPL…LKAF, SDLY…VKSW, and TSVG…GKSF. Residues 15 to 35 traverse the membrane as a helical segment; the sequence is MVASGTGAVVTSLFMTPLDVV. The Mitochondrial matrix portion of the chain corresponds to 36 to 121; the sequence is KVRLQSQRPS…VKIVRHEGTR (86 aa). [2Fe-2S] cluster contacts are provided by Cys-74, Cys-78, Cys-88, and Cys-94. A helical membrane pass occupies residues 122 to 142; sequence TLWSGLPATLVMTVPATAIYF. At 143–160 the chain is on the mitochondrial intermembrane side; it reads TAYDQLKAFLCGRALTSD. Residues 161-181 traverse the membrane as a helical segment; that stretch reads LYAPMVAGALARLGTVTVISP. At 182 to 214 the chain is on the mitochondrial matrix side; sequence LELMRTKLQAQHVSYRELGACVRTAVAQGGWRS. The helical transmembrane segment at 215–235 threads the bilayer; sequence LWLGWGPTALRDVPFSALYWF. The Mitochondrial intermembrane portion of the chain corresponds to 236–258; the sequence is NYELVKSWLNGFRPKDQTSVGMS. Residues 259–279 form a helical membrane-spanning segment; sequence FVAGGISGTVAAVLTLPFDVV. Residues 280–317 lie on the Mitochondrial matrix side of the membrane; it reads KTQRQVALGAMEAVRVNPLHVDSTWLLLRRIRAESGTK. The helical transmembrane segment at 318 to 338 threads the bilayer; it reads GLFAGFLPRIIKAAPSCAIMI. The Mitochondrial intermembrane portion of the chain corresponds to 339-359; sequence STYEFGKSFFQRLNQDRLLGG.

The protein belongs to the mitochondrial carrier (TC 2.A.29) family. Post-translationally, cleaved and degraded by AFG3L2; degradation by AFG3L2 is regulated by the ability of SLC25A39 to bind iron-sulfur. In absence of mitochondrial glutathione, SLC25A39 binds iron-sulfur, preventing cleavage and degradation by AFG3L2. The presence of mitochondrial glutathione prevents iron-sulfur-binding to SLC25A39, promoting cleavage and degradation by AFG3L2. Expressed in many tissues. Abundant in testis and kidney.

It localises to the mitochondrion inner membrane. It carries out the reaction glutathione(in) = glutathione(out). Its activity is regulated as follows. The activity of SLC25A39 is regulated by levels of mitochondrial glutathione via its ability to bind [2Fe-2S] iron-sulfur cluster. Upon physiological levels of mitochondrial glutathione, glutathione prevents iron-sulfur-binding to SLC25A39 promoting cleavage and degradation by AFG3L2. Upon depletion of mitochondrial glutathione, SLC25A39 binds iron-sulfur, preventing cleavage and degradation by AFG3L2. In terms of biological role, mitochondrial transporter required for glutathione import into mitochondria. Glutathione, which plays key roles in oxidative metabolism, is produced exclusively in the cytosol and is imported in many organelles. Mitochondrial glutathione is required for the activity and stability of proteins containing iron-sulfur clusters, as well as erythropoiesis. This chain is Mitochondrial glutathione transporter SLC25A39, found in Homo sapiens (Human).